The primary structure comprises 872 residues: Sine oculis-binding protein homolog (872 aa).

Basic and acidic residues predominate over residues 1 to 14 (MAEMEKEGRPPENK). The disordered stretch occupies residues 1 to 26 (MAEMEKEGRPPENKRSRKPAHPVKRE). FCS-type zinc fingers lie at residues 142–180 (DDVSNVQIMCAWCQKVGIKRYSLSMGSEVKSFCSEKCFA) and 216–256 (FKNN…KCLN). Disordered stretches follow at residues 308-354 (RRKA…KSMP), 411-484 (FIRG…PGAP), and 550-619 (KPPN…GRSE). The span at 319-344 (GQSQGPGPSASTTVSPSDTANCSVTK) shows a compositional bias: polar residues. A compositionally biased stretch (low complexity) spans 417–433 (HHASNPNSPLSNPMLPG). The span at 460-484 (IHPPSTPTMPGNPPGLLPPPPPGAP) shows a compositional bias: pro residues. Positions 620-624 (VVDLT) match the SUMO interaction motif 1 (SIM); mediates the binding to polysumoylated substrates motif. Serine 629 is modified (phosphoserine). An SUMO interaction motif 2 (SIM); mediates the binding to polysumoylated substrates motif is present at residues 651 to 655 (VIDLT). Lysine 675 participates in a covalent cross-link: Glycyl lysine isopeptide (Lys-Gly) (interchain with G-Cter in SUMO2). Position 697 is a phosphoserine (serine 697). A disordered region spans residues 728-770 (AAEGAKGAEPPPEQPPPPPPPPPAPPKKLLSPEEPAVSELESV). Residues 736 to 753 (EPPPEQPPPPPPPPPAPP) show a composition bias toward pro residues.

It belongs to the SOBP family. As to quaternary structure, interacts (via SIM domains) with SUMO1 and SUMO2.

In terms of biological role, implicated in development of the cochlea. This is Sine oculis-binding protein homolog from Bos taurus (Bovine).